The following is a 534-amino-acid chain: EH domain-containing protein 1 (534 aa).

Met1 bears the N-acetylmethionine mark. Positions 55–286 constitute a Dynamin-type G domain; the sequence is FDNKPMVLLV…DLFKDIQSLP (232 aa). The segment at 65 to 72 is G1 motif; sequence GQYSTGKT. 65 to 72 provides a ligand contact to ATP; that stretch reads GQYSTGKT. The interval 91-92 is G2 motif; it reads EP. Positions 153 to 156 are G3 motif; it reads DTPG. A coiled-coil region spans residues 198-227; sequence DEFSEVIKALKNHEDKIRVVLNKADQIETQ. The interval 219 to 222 is G4 motif; sequence NKAD. An ATP-binding site is contributed by Lys220. Residue Ile243 is a region of interest, G5 motif. ATP is bound at residue Trp258. Phosphoserine is present on residues Ser355 and Ser456. Residues 444–532 form the EH domain; it reads DKPTYDEIFY…PHLIPPSKRR (89 aa). The EF-hand domain maps to 476–511; sequence LPNTVLGKIWKLADVDKDGLLDDEEFALANHLIKVK. The Ca(2+) site is built by Asp489, Asp491, Asp493, and Glu500.

Belongs to the TRAFAC class dynamin-like GTPase superfamily. Dynamin/Fzo/YdjA family. EHD subfamily. Homooligomer, and heterooligomer with EHD2, EHD3 and EHD4, ATP-binding is required for heterooligomerization. Interacts (via EH domain) with MICALL1 (via NPF1 motif); the interaction is direct and recruits EHD1 to membranes. Interacts with RAB35; the interaction is indirect through MICALL1 and recruits EHD1 to membranes. Interacts (via EH domain) with PACSIN2 (via NPF motifs); regulates localization to tubular recycling endosome membranes. Interacts with PACSIN1. Interacts with RAB8A. Interacts with FER1L5 (via second C2 domain). Interacts with MYOF. Interacts with ZFYVE20. Interacts (via EH domain) with RAB11FIP2.

The protein resides in the recycling endosome membrane. It localises to the early endosome membrane. The protein localises to the cell membrane. Its subcellular location is the cell projection. It is found in the cilium membrane. In terms of biological role, ATP- and membrane-binding protein that controls membrane reorganization/tubulation upon ATP hydrolysis. In vitro causes vesiculation of endocytic membranes. Acts in early endocytic membrane fusion and membrane trafficking of recycling endosomes. Recruited to endosomal membranes upon nerve growth factor stimulation, indirectly regulates neurite outgrowth. Plays a role in myoblast fusion. Involved in the unidirectional retrograde dendritic transport of endocytosed BACE1 and in efficient sorting of BACE1 to axons implicating a function in neuronal APP processing. Plays a role in the formation of the ciliary vesicle (CV), an early step in cilium biogenesis. Proposed to be required for the fusion of distal appendage vesicles (DAVs) to form the CV by recruiting SNARE complex component SNAP29. Is required for recruitment of transition zone proteins CEP290, RPGRIP1L, TMEM67 and B9D2, and of IFT20 following DAV reorganization before Rab8-dependent ciliary membrane extension. Required for the loss of CCP110 form the mother centriole essential for the maturation of the basal body during ciliogenesis. In Rattus norvegicus (Rat), this protein is EH domain-containing protein 1.